A 1108-amino-acid chain; its full sequence is MFQLPVNNLGSLRKARKTVKKILSDIGLEYCKEHIEDFKQFEPNDFYLKNTTWEDVGLWDPSLTKNQDYRTKPFCCSACPFSSKFFSAYKSHFRNVHSEDFENRILLNCPYCTFNADKKTLETHIKIFHAPNSSAPSSSLSTFKDKNKNDGLKPKQADNVEQAVYYCKKCTYRDPLYEIVRKHIYREHFQHVAAPYIAKAGEKSLNGAVSLGTNAREECNIHCKRCLFMPKSYEALVQHVIEDHERIGYQVTAMIGHTNVVVPRAKPLMLIAPKPQDKKGMGLPPRISSLASGNVRSLPSQQMVNRLSIPKPNLNSTGVNMMSNVHLQQNNYGVKSVGQSYGVGQSVRLGLGGNAPVSIPQQSQSVKQLLPSGNGRSFGLGAEQRPPAAARYSLQTANTSLPPGQVKSPSVSQSQASRVLGQSSSKPPPAATGPPPSNHCATQKWKICTICNELFPENVYSVHFEKEHKAEKVPAVANYIMKIHNFTSKCLYCNRYLPTDTLLNHMLIHGLSCPYCRSTFNDVEKMAAHMRMVHIDEEMGPKTDSTLSFDLTLQQGSHTNIHLLVTTYNLRDAPAESVAYHAQNNAPVPPKPQPKVQEKADVPVKSSPQAAVPYKKDVGKTLCPLCFSILKGPISDALAHHLRERHQVIQTVHPVEKKLTYKCIHCLGVYTSNMTASTITLHLVHCRGVGKTQNGQDKTNAPSRLNQSPGLAPVKRTYEQMEFPLLKKRKLEEDADSPSCFEEKPEEPVVLALDPKGHEDDSYEARKSFLTKYFNKQPYPTRREIEKLAASLWLWKSDIASHFSNKRKKCVRDCEKYKPGVLLGFNMKELNKVKHEMDFDAEWLFENHDEKDSRVNASKTVDKKHNLGKEDDSFSDSFEHLEEESNGSGSPFDPVFEVEPKIPSDNLEEPVPKVIPEGALESEKLDQKEEEEEEEEEDGSKYETIHLTEEPAKLMHDASDSEVDQDDVVEWKDGASPSESGPGSQQISDFEDNTCEMKPGTWSDESSQSEDARSSKPAAKKKATVQDDTEQLKWKNSSYGKVEGFWSKDQSQWENASENAERLPNPQIEWQNSTIDSEDGEQFDSMTDGVADPMHGSLTGVKLSSQQA.

Residues 1-685 (MFQLPVNNLG…ASTITLHLVH (685 aa)) are binds to beta-catenin/CTNNB1. Glycyl lysine isopeptide (Lys-Gly) (interchain with G-Cter in SUMO2) cross-links involve residues Lys39 and Lys72. The C2H2-type 1; degenerate zinc finger occupies 74 to 97 (FCCSACPFSSKFFSAYKSHFRNVH). Position 98 is a phosphoserine (Ser98). Residues 107 to 129 (LNCPYCTFNADKKTLETHIKIFH) form a C2H2-type 2; degenerate zinc finger. Residues 133–154 (SSAPSSSLSTFKDKNKNDGLKP) form a disordered region. The segment covering 143-154 (FKDKNKNDGLKP) has biased composition (basic and acidic residues). Residues Lys144 and Lys155 each participate in a glycyl lysine isopeptide (Lys-Gly) (interchain with G-Cter in SUMO2) cross-link. The C2H2-type 3; degenerate zinc finger occupies 165 to 188 (YYCKKCTYRDPLYEIVRKHIYREH). Glycyl lysine isopeptide (Lys-Gly) (interchain with G-Cter in SUMO2) cross-links involve residues Lys203, Lys231, Lys266, Lys274, Lys278, Lys279, Lys311, and Lys335. The C2H2-type 4; degenerate zinc-finger motif lies at 221–244 (IHCKRCLFMPKSYEALVQHVIEDH). Arg348 carries the asymmetric dimethylarginine modification. The segment at 354–361 (NAPVSIPQ) is neuroprotective peptide; contributes to CTNNB1-binding, but less effective than whole N-terminal region. The disordered stretch occupies residues 360–438 (PQQSQSVKQL…PAATGPPPSN (79 aa)). Glycyl lysine isopeptide (Lys-Gly) (interchain with G-Cter in SUMO2) cross-links involve residues Lys367 and Lys407. The span at 393-422 (SLQTANTSLPPGQVKSPSVSQSQASRVLGQ) shows a compositional bias: polar residues. 2 positions are modified to phosphoserine: Ser408 and Ser412. Residue Lys426 forms a Glycyl lysine isopeptide (Lys-Gly) (interchain with G-Cter in SUMO2) linkage. A compositionally biased stretch (pro residues) spans 426–437 (KPPPAATGPPPS). The C2H2-type 5; atypical zinc-finger motif lies at 446 to 468 (KICTICNELFPENVYSVHFEKEH). 2 consecutive C2H2-type zinc fingers follow at residues 488 to 509 (SKCLYCNRYLPTDTLLNHMLIH) and 511 to 534 (LSCPYCRSTFNDVEKMAAHMRMVH). Residues Lys599 and Lys605 each participate in a glycyl lysine isopeptide (Lys-Gly) (interchain with G-Cter in SUMO2) cross-link. A Phosphoserine modification is found at Ser607. Residues Lys615, Lys620, Lys631, and Lys657 each participate in a glycyl lysine isopeptide (Lys-Gly) (interchain with G-Cter in SUMO2) cross-link. A C2H2-type 8; atypical zinc finger spans residues 621-646 (TLCPLCFSILKGPISDALAHHLRERH). The segment at 661–685 (YKCIHCLGVYTSNMTASTITLHLVH) adopts a C2H2-type 9; atypical zinc-finger fold. A disordered region spans residues 690 to 711 (GKTQNGQDKTNAPSRLNQSPGL). Polar residues predominate over residues 691 to 709 (KTQNGQDKTNAPSRLNQSP). Lys698 participates in a covalent cross-link: Glycyl lysine isopeptide (Lys-Gly) (interchain with G-Cter in SUMO2). At Ser708 the chain carries Phosphoserine. Residues Lys715, Lys727, and Lys730 each participate in a glycyl lysine isopeptide (Lys-Gly) (interchain with G-Cter in SUMO2) cross-link. Phosphoserine is present on Ser737. Lys744 is covalently cross-linked (Glycyl lysine isopeptide (Lys-Gly) (interchain with G-Cter in SUMO2)). Positions 753–813 (LDPKGHEDDS…SNKRKKCVRD (61 aa)) form a DNA-binding region, homeobox. Phosphoserine is present on Ser804. Glycyl lysine isopeptide (Lys-Gly) (interchain with G-Cter in SUMO2) cross-links involve residues Lys806, Lys828, and Lys834. A compositionally biased stretch (basic and acidic residues) spans 851-880 (KDSRVNASKTVDKKHNLGKEDDSFSDSFEH). Positions 851 to 1037 (KDSRVNASKT…DTEQLKWKNS (187 aa)) are disordered. Ser875, Ser877, Ser885, Ser888, and Ser904 each carry phosphoserine. Glycyl lysine isopeptide (Lys-Gly) (interchain with G-Cter in SUMO2) cross-links involve residues Lys913, Lys928, and Lys941. The segment covering 928-938 (KEEEEEEEEED) has biased composition (acidic residues). Residues 939–959 (GSKYETIHLTEEPAKLMHDAS) are compositionally biased toward basic and acidic residues. Ser959 and Ser961 each carry phosphoserine. A compositionally biased stretch (polar residues) spans 977 to 988 (PSESGPGSQQIS). A Glycyl lysine isopeptide (Lys-Gly) (interchain with G-Cter in SUMO2) cross-link involves residue Lys1022. N6-acetyllysine; alternate occurs at positions 1041 and 1048. Glycyl lysine isopeptide (Lys-Gly) (interchain with G-Cter in SUMO2); alternate cross-links involve residues Lys1041 and Lys1048. Residues 1050 to 1108 (QSQWENASENAERLPNPQIEWQNSTIDSEDGEQFDSMTDGVADPMHGSLTGVKLSSQQA) are disordered. Ser1077 bears the Phosphoserine mark.

In terms of assembly, interacts (via N-terminal region) with beta-catenin/CTNNB1 (via the central armadillo domains); interaction is direct and stabilizes CTNNB1 by modulating its phosphorylation by glycogen synthase kinase-3 beta GSK3B. As to expression, expressed in the brain, with a higher expression in cerebellum and hippocampus. Weakly expressed in lung, kidney and intestine, and expressed at intermediate level in testis.

Its subcellular location is the nucleus. It localises to the chromosome. Its function is as follows. May be involved in transcriptional regulation. May mediate some of the neuroprotective peptide VIP-associated effects involving normal growth and cancer proliferation. Positively modulates WNT-beta-catenin/CTNN1B signaling, acting by regulating phosphorylation of, and thereby stabilizing, CTNNB1. May be required for neural induction and neuronal differentiation. May be involved in erythroid differentiation. The polypeptide is Activity-dependent neuroprotector homeobox protein (Adnp) (Mus musculus (Mouse)).